The following is a 114-amino-acid chain: uncharacterized protein (114 aa).

This is an uncharacterized protein from Schizosaccharomyces pombe (strain 972 / ATCC 24843) (Fission yeast).